The following is a 168-amino-acid chain: Phosphopantetheine adenylyltransferase (168 aa).

Thr14 is a binding site for substrate. ATP contacts are provided by residues 14-15 (TF) and His22. Lys46, Leu78, and Arg92 together coordinate substrate. ATP-binding positions include 93-95 (GLR), Glu103, and 128-134 (YSFISSS).

It belongs to the bacterial CoaD family. In terms of assembly, homohexamer. It depends on Mg(2+) as a cofactor.

The protein resides in the cytoplasm. The catalysed reaction is (R)-4'-phosphopantetheine + ATP + H(+) = 3'-dephospho-CoA + diphosphate. Its pathway is cofactor biosynthesis; coenzyme A biosynthesis; CoA from (R)-pantothenate: step 4/5. Reversibly transfers an adenylyl group from ATP to 4'-phosphopantetheine, yielding dephospho-CoA (dPCoA) and pyrophosphate. This chain is Phosphopantetheine adenylyltransferase, found in Xanthomonas campestris pv. campestris (strain 8004).